Reading from the N-terminus, the 244-residue chain is Phosphoadenosine 5'-phosphosulfate reductase (244 aa).

The active-site Nucleophile; cysteine thiosulfonate intermediate is the Cys239.

It belongs to the PAPS reductase family. CysH subfamily.

It localises to the cytoplasm. It catalyses the reaction [thioredoxin]-disulfide + sulfite + adenosine 3',5'-bisphosphate + 2 H(+) = [thioredoxin]-dithiol + 3'-phosphoadenylyl sulfate. It participates in sulfur metabolism; hydrogen sulfide biosynthesis; sulfite from sulfate: step 3/3. In terms of biological role, catalyzes the formation of sulfite from phosphoadenosine 5'-phosphosulfate (PAPS) using thioredoxin as an electron donor. The polypeptide is Phosphoadenosine 5'-phosphosulfate reductase (Zymomonas mobilis subsp. mobilis (strain ATCC 31821 / ZM4 / CP4)).